We begin with the raw amino-acid sequence, 304 residues long: GTPase Era (304 aa).

Positions 9 to 177 (HSGFVAIVGR…VTTLSQHMPE (169 aa)) constitute an Era-type G domain. Residues 17 to 24 (GRPNVGKS) are G1. 17 to 24 (GRPNVGKS) serves as a coordination point for GTP. Positions 43–47 (QTTRN) are G2. Residues 64–67 (DTPG) form a G3 region. GTP-binding positions include 64 to 68 (DTPGI) and 127 to 130 (NKID). Positions 127-130 (NKID) are G4. The G5 stretch occupies residues 156–158 (ISA). A KH type-2 domain is found at 208–285 (TRQEVPHSVA…YLELWVKVSE (78 aa)).

This sequence belongs to the TRAFAC class TrmE-Era-EngA-EngB-Septin-like GTPase superfamily. Era GTPase family. Monomer.

The protein resides in the cytoplasm. The protein localises to the cell membrane. An essential GTPase that binds both GDP and GTP, with rapid nucleotide exchange. Plays a role in 16S rRNA processing and 30S ribosomal subunit biogenesis and possibly also in cell cycle regulation and energy metabolism. The protein is GTPase Era of Pediococcus pentosaceus (strain ATCC 25745 / CCUG 21536 / LMG 10740 / 183-1w).